Reading from the N-terminus, the 597-residue chain is Elongation factor 4 (597 aa).

A tr-type G domain is found at 2-184 (DHIRNFSIIA…SLIAKVPPPK (183 aa)). GTP is bound by residues 14-19 (DHGKST) and 131-134 (NKID).

It belongs to the TRAFAC class translation factor GTPase superfamily. Classic translation factor GTPase family. LepA subfamily.

It localises to the cell inner membrane. It catalyses the reaction GTP + H2O = GDP + phosphate + H(+). Required for accurate and efficient protein synthesis under certain stress conditions. May act as a fidelity factor of the translation reaction, by catalyzing a one-codon backward translocation of tRNAs on improperly translocated ribosomes. Back-translocation proceeds from a post-translocation (POST) complex to a pre-translocation (PRE) complex, thus giving elongation factor G a second chance to translocate the tRNAs correctly. Binds to ribosomes in a GTP-dependent manner. The sequence is that of Elongation factor 4 from Burkholderia ambifaria (strain MC40-6).